Consider the following 845-residue polypeptide: MDIRKEYLDFFKSKGHEIITSAPLVPDDATLLFTNAGMVPFKSIFTGDVPRPNPPIRTSCQTCIRAGGKHNDLDNVGYTARHHTFFEMLGNFSFGEYFKKDAISYAWEFVTEVLKLPKDKLYVTVHEKDDEAYELWQKFIQKDRIYRFGDKDNFWAMGDTGPCGPCSEIFYDQGSEHFNSDEDYMGGDGDRFLEIWNLVFMQFERSKDGTMTPLPKPSIDTGMGLERVTAIKEDKFSNYDSSLFMPLINEVAKLCHKQYEYKTGASYRVISDHIRSVTFLLAQGVNFDKEGRGYVLRRILRRAVRHGYLLGIKEPFMYKLVDKVVELMGEHYSYLKEKKEYVKELIKLEEERFLATIVAGLDLFNEELAKTSSNVFSGEVAFKLYDTYGFPLDLTADMLREKGLSVDEAKFDALMNEQKARAKASWKGSGDAAKESGDFKTLLEEFGENKFIGYDNLKSSSKVLALLNSEFKRVNELKNGEIGYVMLDSTPFYAQSGGQCGDTGMLGENQALDTKKYFGLNLSMIEAKNSIKIGDIVLCEVSLNRLEIRRHHSATHLLQAALRNVLGAHIAQAGSSVEADKLRFDFSHPKPVTKEELEKIENFVNEAILKGAPAKIEIMDIQNAKKSGAIALFGEKYADKVRVLTLGPSKELCGGTHVENLNEIGSFFIVRESGVSAGVRRIEAVCSKAALELSKEFRKEINDIKDSLKGADPLLSIKKLKDEIKSLQNDLKNASNTKDLDVKDINGVKVVVSKFDGDIKSKIDELKNKFDKVVVFLAGVKDGKVSLGSGSKNTSIKAGELVKTVAPIVGGGGGGRDDFATAGGKDESKIDEALNAATKFISEKL.

Positions 552, 556, 653, and 657 each coordinate Zn(2+).

This sequence belongs to the class-II aminoacyl-tRNA synthetase family. Zn(2+) is required as a cofactor.

It is found in the cytoplasm. The catalysed reaction is tRNA(Ala) + L-alanine + ATP = L-alanyl-tRNA(Ala) + AMP + diphosphate. Catalyzes the attachment of alanine to tRNA(Ala) in a two-step reaction: alanine is first activated by ATP to form Ala-AMP and then transferred to the acceptor end of tRNA(Ala). Also edits incorrectly charged Ser-tRNA(Ala) and Gly-tRNA(Ala) via its editing domain. This Campylobacter fetus subsp. fetus (strain 82-40) protein is Alanine--tRNA ligase.